A 92-amino-acid chain; its full sequence is Small ribosomal subunit protein uS19 (92 aa).

It belongs to the universal ribosomal protein uS19 family.

Functionally, protein S19 forms a complex with S13 that binds strongly to the 16S ribosomal RNA. The chain is Small ribosomal subunit protein uS19 from Bartonella henselae (strain ATCC 49882 / DSM 28221 / CCUG 30454 / Houston 1) (Rochalimaea henselae).